A 609-amino-acid polypeptide reads, in one-letter code: Glutamine--fructose-6-phosphate aminotransferase [isomerizing] (609 aa).

C2 acts as the Nucleophile; for GATase activity in catalysis. One can recognise a Glutamine amidotransferase type-2 domain in the interval 2–218 (CGIVGAVAQR…EGDIAEVTRR (217 aa)). 2 consecutive SIS domains span residues 286-426 (AAKL…LKGV) and 458-599 (LAED…VDQP). Catalysis depends on K604, which acts as the For Fru-6P isomerization activity.

Homodimer.

It localises to the cytoplasm. The enzyme catalyses D-fructose 6-phosphate + L-glutamine = D-glucosamine 6-phosphate + L-glutamate. Functionally, catalyzes the first step in hexosamine metabolism, converting fructose-6P into glucosamine-6P using glutamine as a nitrogen source. This is Glutamine--fructose-6-phosphate aminotransferase [isomerizing] from Photorhabdus laumondii subsp. laumondii (strain DSM 15139 / CIP 105565 / TT01) (Photorhabdus luminescens subsp. laumondii).